We begin with the raw amino-acid sequence, 145 residues long: Large ribosomal subunit protein bL17 (145 aa).

Belongs to the bacterial ribosomal protein bL17 family. Part of the 50S ribosomal subunit. Contacts protein L32.

In Francisella tularensis subsp. tularensis (strain FSC 198), this protein is Large ribosomal subunit protein bL17.